Consider the following 245-residue polypeptide: tRNA pseudouridine synthase A (245 aa).

Catalysis depends on D52, which acts as the Nucleophile. Y111 is a binding site for substrate.

It belongs to the tRNA pseudouridine synthase TruA family. As to quaternary structure, homodimer.

It catalyses the reaction uridine(38/39/40) in tRNA = pseudouridine(38/39/40) in tRNA. Formation of pseudouridine at positions 38, 39 and 40 in the anticodon stem and loop of transfer RNAs. This Wolbachia pipientis wMel protein is tRNA pseudouridine synthase A.